Reading from the N-terminus, the 282-residue chain is Putative SLC9B1-like protein SLC9B1P1 (282 aa).

The next 7 helical transmembrane spans lie at 27–47, 51–71, 87–107, 135–155, 174–194, 198–218, and 239–259; these read LLAI…GGMI, IASL…GFFV, GFLV…IGLH, IITN…GAEV, LALC…GFSF, IFIA…GPLA, and VAFL…GILG.

Belongs to the monovalent cation:proton antiporter 1 (CPA1) transporter (TC 2.A.36) family.

It is found in the membrane. The protein is Putative SLC9B1-like protein SLC9B1P1 (SLC9B1P1) of Homo sapiens (Human).